Consider the following 55-residue polypeptide: ATP synthase small subunit 6, mitochondrial (55 aa).

Residues 1-15 (MRQFDPWPVFFRREW) constitute a mitochondrion transit peptide. The helical transmembrane segment at 20 to 39 (PFLVGFAVTGAIITKMSLGF) threads the bilayer.

The protein belongs to the ATPase 6 subunit family.

It localises to the mitochondrion inner membrane. In terms of biological role, mitochondrial membrane ATP synthase (F(1)F(0) ATP synthase or Complex V) produces ATP from ADP in the presence of a proton gradient across the membrane which is generated by electron transport complexes of the respiratory chain. F-type ATPases consist of two structural domains, F(1) - containing the extramembraneous catalytic core and F(0) - containing the membrane proton channel, linked together by a central stalk and a peripheral stalk. During catalysis, ATP synthesis in the catalytic domain of F(1) is coupled via a rotary mechanism of the central stalk subunits to proton translocation. Part of the complex F(0) domain. Confers tolerance to several abiotic stresses (e.g. salt, mannitol, drought, oxidative and cold stresses), probably by providing additional energy needed for cell homeostasis. This chain is ATP synthase small subunit 6, mitochondrial, found in Solanum tuberosum (Potato).